The sequence spans 24 residues: Caerulein precursor fragment B4 (24 aa).

As to expression, expressed by the skin glands.

The protein resides in the secreted. Has antibacterial and antifungal activity. The sequence is that of Caerulein precursor fragment B4 from Xenopus borealis (Kenyan clawed frog).